Reading from the N-terminus, the 901-residue chain is HTH-type transcriptional regulator MalT (901 aa).

An ATP-binding site is contributed by 39 to 46 (SPAGYGKT). Positions 829–894 (ELIRTSPLTQ…AAVQHAQKLL (66 aa)) constitute an HTH luxR-type domain. Residues 853–872 (NEQIAGELEVAATTIKTHIR) constitute a DNA-binding region (H-T-H motif).

Belongs to the MalT family. In terms of assembly, monomer in solution. Oligomerizes to an active state in the presence of the positive effectors ATP and maltotriose.

With respect to regulation, activated by ATP and maltotriose, which are both required for DNA binding. Functionally, positively regulates the transcription of the maltose regulon whose gene products are responsible for uptake and catabolism of malto-oligosaccharides. Specifically binds to the promoter region of its target genes, recognizing a short DNA motif called the MalT box. The sequence is that of HTH-type transcriptional regulator MalT from Escherichia coli O7:K1 (strain IAI39 / ExPEC).